We begin with the raw amino-acid sequence, 118 residues long: DNA-binding protein MmarC5_1518 (118 aa).

Positions 1 to 12 (MNPEEIRQRRLQ) are enriched in basic and acidic residues. The disordered stretch occupies residues 1–35 (MNPEEIRQRRLQEMQAKAQEQGAEDPEAQRQAQEQ).

Belongs to the PDCD5 family.

The polypeptide is DNA-binding protein MmarC5_1518 (Methanococcus maripaludis (strain C5 / ATCC BAA-1333)).